A 431-amino-acid chain; its full sequence is UDP-N-acetylglucosamine 1-carboxyvinyltransferase (431 aa).

A phosphoenolpyruvate-binding site is contributed by 22–23; it reads KN. R102 contacts UDP-N-acetyl-alpha-D-glucosamine. C126 (proton donor) is an active-site residue. C126 carries the 2-(S-cysteinyl)pyruvic acid O-phosphothioketal modification. UDP-N-acetyl-alpha-D-glucosamine contacts are provided by D318 and I340.

The protein belongs to the EPSP synthase family. MurA subfamily.

The protein resides in the cytoplasm. The catalysed reaction is phosphoenolpyruvate + UDP-N-acetyl-alpha-D-glucosamine = UDP-N-acetyl-3-O-(1-carboxyvinyl)-alpha-D-glucosamine + phosphate. The protein operates within cell wall biogenesis; peptidoglycan biosynthesis. Functionally, cell wall formation. Adds enolpyruvyl to UDP-N-acetylglucosamine. The sequence is that of UDP-N-acetylglucosamine 1-carboxyvinyltransferase from Bartonella henselae (strain ATCC 49882 / DSM 28221 / CCUG 30454 / Houston 1) (Rochalimaea henselae).